Here is a 497-residue protein sequence, read N- to C-terminus: Glycogen synthase (497 aa).

Lys-15 provides a ligand contact to ADP-alpha-D-glucose.

The protein belongs to the glycosyltransferase 1 family. Bacterial/plant glycogen synthase subfamily.

The enzyme catalyses [(1-&gt;4)-alpha-D-glucosyl](n) + ADP-alpha-D-glucose = [(1-&gt;4)-alpha-D-glucosyl](n+1) + ADP + H(+). Its pathway is glycan biosynthesis; glycogen biosynthesis. Functionally, synthesizes alpha-1,4-glucan chains using ADP-glucose. The polypeptide is Glycogen synthase (Thermodesulfovibrio yellowstonii (strain ATCC 51303 / DSM 11347 / YP87)).